Here is an 888-residue protein sequence, read N- to C-terminus: E3 ubiquitin-protein ligase SH3RF1 (888 aa).

Residues 12–53 (CPVCLERLDASAKVLPCQHTFCKRCLLGIVGSRNELRCPECR) form an RING-type zinc finger. The span at 108 to 127 (SSKDLQSSQGGQQPRVQSWS) shows a compositional bias: polar residues. Positions 108-128 (SSKDLQSSQGGQQPRVQSWSP) are disordered. SH3 domains are found at residues 134 to 193 (PQLP…IIKP) and 196 to 259 (QPPP…FNSA). Positions 275–321 (DAGECSSAAAQSSTAPKHSDTKKNTKKRHSFTSLTMANKSSQASQNR) are disordered. Positions 292 to 362 (HSDTKKNTKK…APSQVHISTT (71 aa)) are interaction with RAC1. S304 carries the phosphoserine modification. Positions 305-321 (FTSLTMANKSSQASQNR) are enriched in polar residues. The interval 440 to 543 (HLRPQTRPSV…STAGGPAQKL (104 aa)) is interaction with AKT2. Positions 445 to 506 (TRPSVYVAIY…PGNYVAPVTR (62 aa)) constitute an SH3 3 domain. Disordered regions lie at residues 516-548 (VPMSTAGQTSRGVTMVSPSTAGGPAQKLQGNGV), 620-639 (SVGLSHHSLASPQPAPLMPG), and 684-741 (TVLP…ASPT). Positions 520-535 (TAGQTSRGVTMVSPST) are enriched in polar residues. The residue at position 532 (S532) is a Phosphoserine. Residues 692–704 (SPDSASSACGNSS) show a composition bias toward polar residues. Basic and acidic residues predominate over residues 707–718 (KPDKDSKKEKKG). Phosphoserine is present on S735. Residues 829–888 (VVCERHRVVVSYPPQSEAELELKEGDIVFVHKKREDGWFKGTLQRNGKTGLFPGSFVENI) form the SH3 4 domain.

This sequence belongs to the SH3RF family. Interacts with RAC1; in a GTP-dependent manner. Interacts with MAP3K10/MLK2 and MAP3K11/MLK3. Interacts with MAPK8IP; this interaction leads to the PJAC complex (POSH-JIP or SH3RF1/MAPK8IP apoptotic complex) with a 1:1 ratio. Interacts with SIAH1. Interacts with HERP1. Probably part of a signaling complex that may contain SH3RF1, MAPK8IP, DLK1, MAP2K4/MKK4, MAP2K7/MKK7, MAPK8/JNK1, MAPK9/JNK2, AKT1 and AKT2. Found in a complex with RAC2, MAP3K7/TAK1, MAP2K7/MKK7, MAPK8IP1/JIP1, MAPK8/JNK1 and MAPK9/JNK2. Found in a complex with RAC1, MAP3K11/MLK3, MAP2K7/MKK7, MAPK8IP1/JIP1 and MAPK8/JNK1. Interacts with SH3RF2. In terms of processing, phosphorylated at Ser-304 by AKT1 and AKT2. When phosphorylated, it has reduced ability to bind Rac. Post-translationally, autoubiquitinated. Ubiquitinated by SH3RF2, leading to proteasome-mediated degradation.

It is found in the cytoplasm. The protein resides in the perinuclear region. It localises to the cell projection. The protein localises to the lamellipodium. Its subcellular location is the golgi apparatus. It is found in the trans-Golgi network. The enzyme catalyses S-ubiquitinyl-[E2 ubiquitin-conjugating enzyme]-L-cysteine + [acceptor protein]-L-lysine = [E2 ubiquitin-conjugating enzyme]-L-cysteine + N(6)-ubiquitinyl-[acceptor protein]-L-lysine.. The protein operates within protein modification; protein ubiquitination. Its function is as follows. Has E3 ubiquitin-protein ligase activity. In the absence of an external substrate, it can catalyze self-ubiquitination. Stimulates ubiquitination of potassium channel KCNJ1, enhancing it's dynamin-dependent and clathrin-independent endocytosis. Acts as a scaffold protein that coordinates with MAPK8IP1/JIP1 in organizing different components of the JNK pathway, including RAC1 or RAC2, MAP3K11/MLK3 or MAP3K7/TAK1, MAP2K7/MKK7, MAPK8/JNK1 and/or MAPK9/JNK2 into a functional multiprotein complex to ensure the effective activation of the JNK signaling pathway. Regulates the differentiation of CD4(+) and CD8(+) T-cells and promotes T-helper 1 (Th1) cell differentiation. Regulates the activation of MAPK8/JNK1 and MAPK9/JNK2 in CD4(+) T-cells and the activation of MAPK8/JNK1 in CD8(+) T-cells. Plays a crucial role in the migration of neocortical neurons in the developing brain. Controls proper cortical neuronal migration and the formation of proximal cytoplasmic dilation in the leading process (PCDLP) in migratory neocortical neurons by regulating the proper localization of activated RAC1 and F-actin assembly. (Microbial infection) Plays an essential role in the targeting of HIV-1 Gag to the plasma membrane, this function is dependent on it's RING domain, and hence it's E3 ligase activity. The sequence is that of E3 ubiquitin-protein ligase SH3RF1 (SH3RF1) from Homo sapiens (Human).